The chain runs to 954 residues: cGMP-specific 3',5'-cyclic phosphodiesterase alpha (954 aa).

Residues 1–259 (MMDTKVDQTI…NTFYSSFPFK (259 aa)) are Cytoplasmic-facing. Residues 260-280 (LFLHSLYMIFICFIYFVVLYF) traverse the membrane as a helical segment. Topologically, residues 281–296 (MLLKKIYTHPFIFHLS) are extracellular. The chain crosses the membrane as a helical span at residues 297–317 (VLKFLFDIIFFLSFILYPLFL). Topologically, residues 318-327 (RLKRIDKIIY) are cytoplasmic. A helical membrane pass occupies residues 328 to 348 (SSYISSYIFVCVTFLYSFIIF). Topologically, residues 349–365 (KCSSYSVKMNSNTYQNN) are extracellular. Residues 366–386 (FVFQNMLFLLINIIYICIFCF) form a helical membrane-spanning segment. At 387-401 (LKNYMILYSFLYNCR) the chain is on the cytoplasmic side. A helical membrane pass occupies residues 402-422 (FSIFCILFIFLYYYLFFSLDF). Topologically, residues 423–432 (YRIIHLPLDN) are extracellular. A helical transmembrane segment spans residues 433 to 453 (FFFPFLCFLFFSFLFIFKIIM). Over 454–954 (SLYYEYVYEK…LSKLELIKFE (501 aa)) the chain is Cytoplasmic. One can recognise a PDEase domain in the interval 586–930 (NQEETKSFLS…ERWESHKNDN (345 aa)). His-680 (proton donor) is an active-site residue. 680–684 (HTSLH) is a binding site for 3',5'-cyclic GMP. His-684, His-720, Asp-721, and Asp-832 together coordinate Zn(2+). 3',5'-cyclic GMP is bound by residues Asp-721, Asp-832, and Gln-884. Asp-721 is a binding site for Mg(2+).

The protein belongs to the cyclic nucleotide phosphodiesterase family. Requires Zn(2+) as cofactor. It depends on Mg(2+) as a cofactor.

It localises to the membrane. The enzyme catalyses 3',5'-cyclic GMP + H2O = GMP + H(+). It participates in purine metabolism; 3',5'-cyclic GMP degradation; GMP from 3',5'-cyclic GMP: step 1/1. With respect to regulation, not inhibited by cAMP. Inhibited by zaprinast. In terms of biological role, specifically hydrolyzes the second messenger cGMP, which is a key regulator of many important physiological processes. The polypeptide is cGMP-specific 3',5'-cyclic phosphodiesterase alpha (Plasmodium falciparum (isolate 3D7)).